The sequence spans 364 residues: Lipoyl synthase, chloroplastic (364 aa).

The transit peptide at 1-70 directs the protein to the chloroplast; the sequence is MEQTLFNPSI…PNVKKPEWLR (70 aa). A compositionally biased stretch (low complexity) spans 32–52; sequence STNSPSSNTKTTTVTVPSKKT. The segment at 32–64 is disordered; it reads STNSPSSNTKTTTVTVPSKKTMGPYTGRDPNVK. The [4Fe-4S] cluster site is built by cysteine 95, cysteine 100, cysteine 106, cysteine 126, cysteine 130, cysteine 133, and serine 341. The 222-residue stretch at 109–330 folds into the Radical SAM core domain; that stretch reads GGGDGIATAT…KEYGESIGFR (222 aa).

This sequence belongs to the radical SAM superfamily. Lipoyl synthase family. [4Fe-4S] cluster serves as cofactor.

The protein resides in the plastid. It is found in the chloroplast. It carries out the reaction [[Fe-S] cluster scaffold protein carrying a second [4Fe-4S](2+) cluster] + N(6)-octanoyl-L-lysyl-[protein] + 2 oxidized [2Fe-2S]-[ferredoxin] + 2 S-adenosyl-L-methionine + 4 H(+) = [[Fe-S] cluster scaffold protein] + N(6)-[(R)-dihydrolipoyl]-L-lysyl-[protein] + 4 Fe(3+) + 2 hydrogen sulfide + 2 5'-deoxyadenosine + 2 L-methionine + 2 reduced [2Fe-2S]-[ferredoxin]. It participates in protein modification; protein lipoylation via endogenous pathway; protein N(6)-(lipoyl)lysine from octanoyl-[acyl-carrier-protein]: step 2/2. Catalyzes the radical-mediated insertion of two sulfur atoms into the C-6 and C-8 positions of the octanoyl moiety bound to the lipoyl domains of lipoate-dependent enzymes, thereby converting the octanoylated domains into lipoylated derivatives. This Ricinus communis (Castor bean) protein is Lipoyl synthase, chloroplastic.